We begin with the raw amino-acid sequence, 469 residues long: Adenosylhomocysteinase (469 aa).

The substrate site is built by T63, D139, and E164. 165-167 (TTT) contributes to the NAD(+) binding site. Substrate contacts are provided by K194 and D198. Residues N199, 228-233 (GYGDVG), E251, N300, 321-323 (IGH), and N375 contribute to the NAD(+) site.

Belongs to the adenosylhomocysteinase family. It depends on NAD(+) as a cofactor.

It is found in the cytoplasm. The catalysed reaction is S-adenosyl-L-homocysteine + H2O = L-homocysteine + adenosine. It functions in the pathway amino-acid biosynthesis; L-homocysteine biosynthesis; L-homocysteine from S-adenosyl-L-homocysteine: step 1/1. Functionally, may play a key role in the regulation of the intracellular concentration of adenosylhomocysteine. This chain is Adenosylhomocysteinase, found in Pseudomonas aeruginosa (strain UCBPP-PA14).